The sequence spans 671 residues: Spartin (671 aa).

Methionine 1 bears the N-acetylmethionine mark. An MIT domain is found at 16 to 94 (IKEAYEKAFM…LQNVRTRLEI (79 aa)). Residues 110–175 (VPKLYPEFPP…CPAEAPPAYS (66 aa)) are disordered. Residues 118 to 128 (PPKDACKKSPE) are compositionally biased toward basic and acidic residues. The residue at position 126 (serine 126) is a Phosphoserine. Over residues 143-158 (GSASAACAGPSGAPSA) the composition is skewed to low complexity. A compositionally biased stretch (pro residues) spans 159–174 (LPVPSPSCPAEAPPAY). The ubiquitin-binding region (UBR) domain stretch occupies residues 190–385 (DSGEFSSVGE…SIDQGSKDAR (196 aa)). Residues 193–200 (EFSSVGED) carry the LC3-interacting region (LIR); mediates interaction with MAP1LC3A AND MAP1LC3C motif. Positions 346–421 (FQIPGRSSHP…SSEEKSKELP (76 aa)) are disordered. A Glycyl lysine isopeptide (Lys-Gly) (interchain with G-Cter in ubiquitin) cross-link involves residue lysine 360. The segment covering 369-379 (QSSSSGSSIDQ) has biased composition (low complexity). The span at 384-393 (ARHKGKRGKK) shows a compositional bias: basic residues. Residues 431–615 (ILSGASWVSW…YNIDNIGIKA (185 aa)) form the Senescence domain. Residues 435 to 507 (ASWVSWGLVK…LVDGVCTVAN (73 aa)) are required for localization to lipid droplets. Position 474 is a phosphoserine (serine 474). The tract at residues 635-671 (VERPQRESQGGATSTEGRRDIGKQVEEEKPGAGKKDK) is disordered. The segment covering 650-671 (EGRRDIGKQVEEEKPGAGKKDK) has biased composition (basic and acidic residues).

As to quaternary structure, interacts with ITCH and WWP1. Interacts (via MIT domain) with IST1; leading to the recruitment of SPART to midbodies. Interacts with MAP1LC3A and MAP1LC3C. Ubiquitinated; ubiquitination does not require ITCH and WWP1. As to expression, brain (at protein level).

The protein localises to the cytoplasm. The protein resides in the midbody. Its subcellular location is the lipid droplet. Its function is as follows. Lipophagy receptor that plays an important role in lipid droplet (LD) turnover in motor neurons. Localizes to LDs and interacts with components of the autophagy machinery, such as MAP1LC3A/C proteins to deliver LDs to autophagosomes for degradation via lipophagy. Lipid transfer protein required for lipid droplet degradation, including by lipophagy. Can bind and transfer all lipid species found in lipid droplets, from phospholipids to triglycerides and sterol esters but the direction of lipid transfer by spartin and its cargos are unknown. May be implicated in endosomal trafficking, or microtubule dynamics, or both. Participates in cytokinesis. In Mus musculus (Mouse), this protein is Spartin.